Consider the following 74-residue polypeptide: Peptide ToAP4 (74 aa).

A signal peptide spans Met1–Ala22. A Lysine amide modification is found at Lys39. The propeptide occupies Gly40 to Phe74.

The protein belongs to the non-disulfide-bridged peptide (NDBP) superfamily. Short antimicrobial peptide (group 4) family. Expressed by the venom gland.

The protein resides in the secreted. Shows anti-inflammatory activities, since it decreases release of pro-inflammatory cytokines, and increases release of anti-inflammatory cytokines. Acts by blocking the Toll-like receptor 4 (TLR4). Also increases MHC-II expression in LPS-stimulated cells. Does not show antibacterial activity on Mycobacterium abscessus subsp. massiliense. Does not show antifungal activity. Has low hemolytic activity on human erythrocyte and low monocyte cytotoxicity. In vivo, does not induce immune cell migration. Helical wheel projections predict an amphipathic peptide with distinct hydrophobic and hydrophilic faces. The sequence is that of Peptide ToAP4 from Tityus obscurus (Amazonian scorpion).